A 79-amino-acid polypeptide reads, in one-letter code: UPF0154 protein Lm4b_01315 (79 aa).

Residues 2 to 22 (WIYILVGIICLLAGLAGGFFI) form a helical membrane-spanning segment. Over residues 57-66 (KINQMMSAMN) the composition is skewed to polar residues. Positions 57–79 (KINQMMSAMNKQQEKEKPKKTKK) are disordered.

It belongs to the UPF0154 family.

It is found in the cell membrane. This Listeria monocytogenes serotype 4b (strain CLIP80459) protein is UPF0154 protein Lm4b_01315.